The following is a 792-amino-acid chain: E3 UFM1-protein ligase 1 (792 aa).

Position 2 is an N-acetylalanine (A2). Residues 2–200 (ADAWEEIRRL…RGLFSAITRP (199 aa)) form a mediates interaction with DDRGK1 region. A required for E3 UFM1-protein ligase activity region spans residues 2–212 (ADAWEEIRRL…VNSLISRYGF (211 aa)). The tract at residues 121-250 (DRLAEEVNDK…KAVFIPDIYS (130 aa)) is involved in CDK5RAP3-binding. A mediates interaction with TRIP4 region spans residues 200 to 400 (PTAVNSLISR…NPVHLITEED (201 aa)). Residues 412–471 (TSKKDKKDERRRKATEGSGSVRGGGGSNAREYKIKKTKKKGRKDDDSDDESSHTGKKKPE) form a disordered region. The residue at position 433 (R433) is an Omega-N-methylarginine. Residues 453 to 471 (RKDDDSDDESSHTGKKKPE) are compositionally biased toward basic and acidic residues. S458 is subject to Phosphoserine. The segment at 488-682 (LQDAPEEFIS…QLKVTEDPAL (195 aa)) is mediates interaction with CDK5RAP3. T534 carries the phosphothreonine modification. A Phosphoserine modification is found at S752.

It belongs to the UFL1 family. As to quaternary structure, catalytic component of the UFM1 ribosome E3 ligase (UREL) complex, composed of UFL1, DDRGK1 and CDK5RAP3. Interacts with E2-like enzyme UFC1. Interacts with RELA. Interacts with NBN; promoting recruitment to double-strand breaks following DNA damage. Interacts (when phosphorylated) with YWHAG/14-3-3-gamma; sequestering UFL1 and preventing its association with PDCD1/PD-1 substrate. Ubiquitinated, leading to its degradation by the proteasome. Interaction with CDK5RAP3 protects both proteins against ubiquitination and degradation via the proteasome. In terms of processing, phosphorylation at Thr-534 by AMPK promotes its interaction with YWHAG/14-3-3-gamma, thereby preventing UFL1 association with PDCD1/PD-1 substrate.

The protein resides in the endoplasmic reticulum membrane. It localises to the cytoplasm. It is found in the cytosol. The protein localises to the nucleus. Its subcellular location is the chromosome. Functionally, E3 protein ligase that mediates ufmylation, the covalent attachment of the ubiquitin-like modifier UFM1 to lysine residues on target proteins, and which plays a key role in various processes, such as ribosome recycling, response to DNA damage, interferon response or reticulophagy (also called ER-phagy). Catalyzes ufmylation of many protein, such as CD274/PD-L1, CDK5RAP3, CYB5R3, DDRGK1, EIF6, histone H4, MRE11, P4HB, PDCD1/PD-1, TRIP4, RPN1, RPS20/uS10, RPL10/uL16, RPL26/uL24, SYVN1/HRD1 and TP53/p53. As part of the UREL complex, plays a key role in ribosome recycling by catalyzing mono-ufmylation of RPL26/uL24 subunit of the 60S ribosome. Ufmylation of RPL26/uL24 occurs on free 60S ribosomes following ribosome dissociation: it weakens the junction between post-termination 60S subunits and SEC61 translocons, promoting release and recycling of the large ribosomal subunit from the endoplasmic reticulum membrane. Ufmylation of RPL26/uL24 and subsequent 60S ribosome recycling either take place after normal termination of translation or after ribosome stalling during cotranslational translocation at the endoplasmic reticulum. Involved in reticulophagy in response to endoplasmic reticulum stress by mediating ufmylation of proteins such as CYB5R3 and RPN1, thereby promoting lysosomal degradation of ufmylated proteins. Ufmylation in response to endoplasmic reticulum stress is essential for processes such as hematopoiesis, blood vessel morphogenesis or inflammatory response. Regulates inflammation in response to endoplasmic reticulum stress by promoting reticulophagy, leading to inhibit the activity of the NF-kappa-B transcription factor. Mediates ufmylation of DDRGK1 and CDK5RAP3; the role of these modifications is however unclear: as both DDRGK1 and CDK5RAP3 act as substrate adapters for ufmylation, it is uncertain whether ufmylation of these proteins is, a collateral effect or is required for ufmylation. Acts as a negative regulator of T-cell activation by mediating ufmylation and stabilization of PDCD1/PD-1. Also involved in the response to DNA damage: recruited to double-strand break sites following DNA damage and mediates monoufmylation of histone H4 and ufmylation of MRE11. Mediates ufmylation of TP53/p53, promoting its stability. Catalyzes ufmylation of TRIP4, thereby playing a role in nuclear receptor-mediated transcription. Required for hematopoietic stem cell function and hematopoiesis. The polypeptide is E3 UFM1-protein ligase 1 (Bos taurus (Bovine)).